Reading from the N-terminus, the 336-residue chain is Protein-glutamate methylesterase/protein-glutamine glutaminase 2 (336 aa).

Residues 2–119 enclose the Response regulatory domain; it reads KIAIVNDMPM…PNPKEAAAPL (118 aa). Asp53 carries the post-translational modification 4-aspartylphosphate. Residues 147 to 336 enclose the CheB-type methylesterase domain; that stretch reads PSRRDRLVAI…APRLIEVFTQ (190 aa). Residues Ser159, His186, and Asp279 contribute to the active site.

This sequence belongs to the CheB family. Post-translationally, phosphorylated by CheA. Phosphorylation of the N-terminal regulatory domain activates the methylesterase activity.

Its subcellular location is the cytoplasm. The enzyme catalyses [protein]-L-glutamate 5-O-methyl ester + H2O = L-glutamyl-[protein] + methanol + H(+). It carries out the reaction L-glutaminyl-[protein] + H2O = L-glutamyl-[protein] + NH4(+). Its function is as follows. Involved in chemotaxis. Part of a chemotaxis signal transduction system that modulates chemotaxis in response to various stimuli. Catalyzes the demethylation of specific methylglutamate residues introduced into the chemoreceptors (methyl-accepting chemotaxis proteins or MCP) by CheR. Also mediates the irreversible deamidation of specific glutamine residues to glutamic acid. This Pseudomonas syringae pv. syringae (strain B728a) protein is Protein-glutamate methylesterase/protein-glutamine glutaminase 2.